Consider the following 906-residue polypeptide: Cadherin-2 (906 aa).

The N-terminal stretch at 1-25 (MCRIAGALRTLLPLLAALLQASVEA) is a signal peptide. A propeptide spanning residues 26-159 (SGEIALCKTG…HSGHLQRQKR (134 aa)) is cleaved from the precursor. Ser-96 and Ser-135 each carry phosphoserine; by FAM20C. Cadherin domains lie at 160–267 (DWVI…RPEF), 268–382 (LHQV…PPEF), 383–497 (TAMT…NPYF), 498–603 (APNP…DNAP), and 604–714 (QVLP…DVDR). At 160-724 (DWVIPPINLP…IVGAGLGTGA (565 aa)) the chain is on the extracellular side. Glu-170 is a Ca(2+) binding site. Asn-190 carries N-linked (GlcNAc...) asparagine glycosylation. Asp-226, Glu-228, Asp-259, Met-260, Asn-261, Asp-262, and Asn-263 together coordinate Ca(2+). Asn-273 carries N-linked (GlcNAc...) asparagine glycosylation. The Ca(2+) site is built by Asp-293, Asp-295, and Asn-301. An N-linked (GlcNAc...) asparagine glycan is attached at Asn-325. Asp-353 provides a ligand contact to Ca(2+). Residues Asn-402, Asn-572, Asn-651, and Asn-692 are each glycosylated (N-linked (GlcNAc...) asparagine). Residues 725–745 (IIAILLCIIILLILVLMFVVW) form a helical membrane-spanning segment. Over 746–906 (MKRRDKERQA…LADMYGGGDD (161 aa)) the chain is Cytoplasmic. A compositionally biased stretch (low complexity) spans 863–880 (SGSTAGSLSSLNSSSSGG). The interval 863–884 (SGSTAGSLSSLNSSSSGGEQDY) is disordered.

Homodimer (via extracellular region). Can also form heterodimers with other cadherins (via extracellular region). Dimerization occurs in trans, i.e. with a cadherin chain from another cell. Interacts with CDCP1. Interacts with PCDH8; this complex may also include TAOK2. The interaction with PCDH8 may lead to internalization through TAOK2/p38 MAPK pathway. Identified in a complex containing FGFR4, NCAM1, CDH2, PLCG1, FRS2, SRC, SHC1, GAP43 and CTTN. May interact with OBSCN (via protein kinase domain 2). Interacts with FBXO45. Cleaved by MMP24. Ectodomain cleavage leads to the generation of a soluble 90 kDa N-terminal soluble fragment and a 45 kDa membrane-bound C-terminal fragment 1 (CTF1), which is further cleaved by gamma-secretase into a 35 kDa. Cleavage in neural stem cells by MMP24 affects CDH2-mediated anchorage of neural stem cells to ependymocytes in the adult subependymal zone, leading to modulate neural stem cell quiescence. Post-translationally, may be phosphorylated by OBSCN.

Its subcellular location is the cell membrane. It is found in the sarcolemma. The protein resides in the cell junction. It localises to the cell surface. The protein localises to the desmosome. Its subcellular location is the adherens junction. Functionally, calcium-dependent cell adhesion protein; preferentially mediates homotypic cell-cell adhesion by dimerization with a CDH2 chain from another cell. Cadherins may thus contribute to the sorting of heterogeneous cell types. Acts as a regulator of neural stem cells quiescence by mediating anchorage of neural stem cells to ependymocytes in the adult subependymal zone: upon cleavage by MMP24, CDH2-mediated anchorage is affected, leading to modulate neural stem cell quiescence. Plays a role in cell-to-cell junction formation between pancreatic beta cells and neural crest stem (NCS) cells, promoting the formation of processes by NCS cells. Required for proper neurite branching. Required for pre- and postsynaptic organization. CDH2 may be involved in neuronal recognition mechanism. In hippocampal neurons, may regulate dendritic spine density. The protein is Cadherin-2 (CDH2) of Homo sapiens (Human).